The sequence spans 603 residues: UvrABC system protein C (603 aa).

The GIY-YIG domain maps to 15–92; that stretch reads DQPGCYLMKD…IKKHDPRFNI (78 aa). Residues 197-232 enclose the UVR domain; it reads KTVKNDLMKKMQVAAENMEFEKAGEFRDQINAIETT.

It belongs to the UvrC family. As to quaternary structure, interacts with UvrB in an incision complex.

The protein localises to the cytoplasm. Functionally, the UvrABC repair system catalyzes the recognition and processing of DNA lesions. UvrC both incises the 5' and 3' sides of the lesion. The N-terminal half is responsible for the 3' incision and the C-terminal half is responsible for the 5' incision. The chain is UvrABC system protein C from Listeria welshimeri serovar 6b (strain ATCC 35897 / DSM 20650 / CCUG 15529 / CIP 8149 / NCTC 11857 / SLCC 5334 / V8).